An 82-amino-acid chain; its full sequence is Small ribosomal subunit protein bS16 (82 aa).

Belongs to the bacterial ribosomal protein bS16 family.

The chain is Small ribosomal subunit protein bS16 from Klebsiella pneumoniae (strain 342).